We begin with the raw amino-acid sequence, 361 residues long: DNA replication and repair protein RecF (361 aa).

Position 30–37 (30–37 (GPNGSGKT)) interacts with ATP.

It belongs to the RecF family.

Its subcellular location is the cytoplasm. Its function is as follows. The RecF protein is involved in DNA metabolism; it is required for DNA replication and normal SOS inducibility. RecF binds preferentially to single-stranded, linear DNA. It also seems to bind ATP. In Erwinia tasmaniensis (strain DSM 17950 / CFBP 7177 / CIP 109463 / NCPPB 4357 / Et1/99), this protein is DNA replication and repair protein RecF.